We begin with the raw amino-acid sequence, 151 residues long: Large ribosomal subunit protein uL13 (151 aa).

Belongs to the universal ribosomal protein uL13 family. In terms of assembly, part of the 50S ribosomal subunit.

Its function is as follows. This protein is one of the early assembly proteins of the 50S ribosomal subunit, although it is not seen to bind rRNA by itself. It is important during the early stages of 50S assembly. The polypeptide is Large ribosomal subunit protein uL13 (Synechocystis sp. (strain ATCC 27184 / PCC 6803 / Kazusa)).